The chain runs to 541 residues: Imidazole glycerol phosphate synthase hisHF (541 aa).

The 213-residue stretch at 2–214 (IVSIVDYGSG…LTGNYEQPIS (213 aa)) folds into the Glutamine amidotransferase type-1 domain. Active-site for GATase activity residues include C80, H189, and E191. The tract at residues 228-541 (LTKRIIACLD…LAIHDVLVRT (314 aa)) is cyclase. Catalysis depends on residues D237 and D396.

It in the C-terminal section; belongs to the HisA/HisF family.

It carries out the reaction 5-[(5-phospho-1-deoxy-D-ribulos-1-ylimino)methylamino]-1-(5-phospho-beta-D-ribosyl)imidazole-4-carboxamide + L-glutamine = D-erythro-1-(imidazol-4-yl)glycerol 3-phosphate + 5-amino-1-(5-phospho-beta-D-ribosyl)imidazole-4-carboxamide + L-glutamate + H(+). It catalyses the reaction L-glutamine + H2O = L-glutamate + NH4(+). The protein operates within amino-acid biosynthesis; L-histidine biosynthesis; L-histidine from 5-phospho-alpha-D-ribose 1-diphosphate: step 5/9. Functionally, IGPS catalyzes the conversion of PRFAR and glutamine to IGP, AICAR and glutamate. The glutaminase domain produces the ammonia necessary for the cyclase domain to produce IGP and AICAR from PRFAR. The ammonia is channeled to the active site of the cyclase domain. The chain is Imidazole glycerol phosphate synthase hisHF (his4) from Schizosaccharomyces pombe (strain 972 / ATCC 24843) (Fission yeast).